Reading from the N-terminus, the 457-residue chain is Siroheme synthase (457 aa).

The interval 1–204 (MDHLPIFCQL…ADEKAVNATT (204 aa)) is precorrin-2 dehydrogenase /sirohydrochlorin ferrochelatase. Residues 22-23 (DV) and 43-44 (LN) contribute to the NAD(+) site. Ser128 is modified (phosphoserine). The interval 216–457 (GEVVLVGAGP…RDKLNWFSNH (242 aa)) is uroporphyrinogen-III C-methyltransferase. Pro225 provides a ligand contact to S-adenosyl-L-methionine. Asp248 (proton acceptor) is an active-site residue. Lys270 (proton donor) is an active-site residue. Residues 301–303 (GGD), Ile306, 331–332 (TA), Met382, and Gly411 contribute to the S-adenosyl-L-methionine site.

The protein in the N-terminal section; belongs to the precorrin-2 dehydrogenase / sirohydrochlorin ferrochelatase family. This sequence in the C-terminal section; belongs to the precorrin methyltransferase family.

The catalysed reaction is uroporphyrinogen III + 2 S-adenosyl-L-methionine = precorrin-2 + 2 S-adenosyl-L-homocysteine + H(+). It carries out the reaction precorrin-2 + NAD(+) = sirohydrochlorin + NADH + 2 H(+). The enzyme catalyses siroheme + 2 H(+) = sirohydrochlorin + Fe(2+). It participates in cofactor biosynthesis; adenosylcobalamin biosynthesis; precorrin-2 from uroporphyrinogen III: step 1/1. Its pathway is cofactor biosynthesis; adenosylcobalamin biosynthesis; sirohydrochlorin from precorrin-2: step 1/1. The protein operates within porphyrin-containing compound metabolism; siroheme biosynthesis; precorrin-2 from uroporphyrinogen III: step 1/1. It functions in the pathway porphyrin-containing compound metabolism; siroheme biosynthesis; siroheme from sirohydrochlorin: step 1/1. It participates in porphyrin-containing compound metabolism; siroheme biosynthesis; sirohydrochlorin from precorrin-2: step 1/1. In terms of biological role, multifunctional enzyme that catalyzes the SAM-dependent methylations of uroporphyrinogen III at position C-2 and C-7 to form precorrin-2 via precorrin-1. Then it catalyzes the NAD-dependent ring dehydrogenation of precorrin-2 to yield sirohydrochlorin. Finally, it catalyzes the ferrochelation of sirohydrochlorin to yield siroheme. In Salmonella paratyphi A (strain ATCC 9150 / SARB42), this protein is Siroheme synthase.